We begin with the raw amino-acid sequence, 92 residues long: Sec-independent protein translocase protein TatA (92 aa).

The helical transmembrane segment at 1–21 (MGIFDWKHWIVILVVVVLVFG) threads the bilayer. Residues 44 to 92 (NDDEKPADPVVNPVPPAQPVHPQATQPITERRTFDVQAEKVEEPTRKDS) form a disordered region. Residues 72–92 (TERRTFDVQAEKVEEPTRKDS) show a composition bias toward basic and acidic residues.

It belongs to the TatA/E family. The Tat system comprises two distinct complexes: a TatABC complex, containing multiple copies of TatA, TatB and TatC subunits, and a separate TatA complex, containing only TatA subunits. Substrates initially bind to the TatABC complex, which probably triggers association of the separate TatA complex to form the active translocon.

The protein localises to the cell inner membrane. Functionally, part of the twin-arginine translocation (Tat) system that transports large folded proteins containing a characteristic twin-arginine motif in their signal peptide across membranes. TatA could form the protein-conducting channel of the Tat system. The sequence is that of Sec-independent protein translocase protein TatA from Pseudomonas fluorescens (strain SBW25).